A 694-amino-acid chain; its full sequence is MAREYKIEDYRNFGIMAHIDAGKTTMTERILFYTGKNHKIGETHDGASTMDWMEQEQERGITITSAATTTFWQGRDGKKRRFNIIDTPGHVDFTIEVERSLRVLDGAIALLDANAGVEPQTETVWRQAEKYHVPRMVFVNKMDKIGADFYRSVEMVGSRLGAVALPVQLPIGAENDFVGVVDLIEMKALTWDGTIGAPATVGEIPADMADKAEEYREKLIELAVEIDEAAMEAYLEGTMPTNDELRALIRKGTIEVKFHPILCGTAFKNRGVQPLLDAVVEFLPAPTDVPAIKGIDVKTETETTRESSDEAPLSMLAFKIMNDPFVGSLTFARIYSGKLTKGVSLENTVKGKRERIGRMLQMHSNSREDIDEAFAGDIVALAGLKETTTGDTLCDPLKPVILERMEFPDPVIEIAIEPKTKADQEKMGIALNRLAAEDPSFRVKSDEESGQTIIAGMGELHLDILVDRMKREFKVEANVGAPQVAYRESITRAAEIDYTHKKQSGGSGQFARVKIIFEPHDGDDFIFESKIVGGSVPKEYIPGVQKGIESVMGAGPLAGFPMLGVKATLIDGAYHDVDSSVLAFEIASRAAFREGAQKAGAQLLEPIMKVEVVTPEDYVGDVIGDLNSRRGQISGTEARGIAAVVNAMVPLANMFGYVNSLRSMSQGRAQYTMQFDHYEPVPTAVAQEIQKKFA.

The tr-type G domain occupies 8 to 287 (EDYRNFGIMA…AVVEFLPAPT (280 aa)). Residues 17 to 24 (AHIDAGKT), 86 to 90 (DTPGH), and 140 to 143 (NKMD) contribute to the GTP site.

This sequence belongs to the TRAFAC class translation factor GTPase superfamily. Classic translation factor GTPase family. EF-G/EF-2 subfamily.

It localises to the cytoplasm. Its function is as follows. Catalyzes the GTP-dependent ribosomal translocation step during translation elongation. During this step, the ribosome changes from the pre-translocational (PRE) to the post-translocational (POST) state as the newly formed A-site-bound peptidyl-tRNA and P-site-bound deacylated tRNA move to the P and E sites, respectively. Catalyzes the coordinated movement of the two tRNA molecules, the mRNA and conformational changes in the ribosome. This is Elongation factor G from Brucella abortus (strain S19).